The following is a 498-amino-acid chain: ATP synthase subunit beta, chloroplastic (498 aa).

172–179 (GGAGVGKT) provides a ligand contact to ATP.

Belongs to the ATPase alpha/beta chains family. As to quaternary structure, F-type ATPases have 2 components, CF(1) - the catalytic core - and CF(0) - the membrane proton channel. CF(1) has five subunits: alpha(3), beta(3), gamma(1), delta(1), epsilon(1). CF(0) has four main subunits: a(1), b(1), b'(1) and c(9-12).

It localises to the plastid. Its subcellular location is the chloroplast thylakoid membrane. The enzyme catalyses ATP + H2O + 4 H(+)(in) = ADP + phosphate + 5 H(+)(out). Produces ATP from ADP in the presence of a proton gradient across the membrane. The catalytic sites are hosted primarily by the beta subunits. This Gossypium barbadense (Sea Island cotton) protein is ATP synthase subunit beta, chloroplastic.